Here is a 631-residue protein sequence, read N- to C-terminus: DNA mismatch repair protein MutL (631 aa).

Belongs to the DNA mismatch repair MutL/HexB family.

Its function is as follows. This protein is involved in the repair of mismatches in DNA. It is required for dam-dependent methyl-directed DNA mismatch repair. May act as a 'molecular matchmaker', a protein that promotes the formation of a stable complex between two or more DNA-binding proteins in an ATP-dependent manner without itself being part of a final effector complex. This chain is DNA mismatch repair protein MutL, found in Mannheimia succiniciproducens (strain KCTC 0769BP / MBEL55E).